Reading from the N-terminus, the 531-residue chain is Tyrosine/DOPA decarboxylase 2 (531 aa).

Lysine 319 is subject to N6-(pyridoxal phosphate)lysine.

This sequence belongs to the group II decarboxylase family. Homodimer. Requires pyridoxal 5'-phosphate as cofactor. Predominantly expressed in the roots and stems, while a lower level expression is seen in the sepals and carpels of fully expanded flowers.

The enzyme catalyses L-tyrosine + H(+) = tyramine + CO2. It carries out the reaction L-dopa + H(+) = dopamine + CO2. The catalysed reaction is 5-hydroxy-L-tryptophan + H(+) = serotonin + CO2. Functionally, marginally higher substrate specificity for L-DOPA over L-tyrosine. The sequence is that of Tyrosine/DOPA decarboxylase 2 (TYDC2) from Papaver somniferum (Opium poppy).